Reading from the N-terminus, the 291-residue chain is Endo-1,4-beta-xylanase 11B (291 aa).

A signal peptide spans 1–19; sequence MVAFSSLFLGASIAATALA. Positions 34-222 constitute a GH11 domain; the sequence is TYTQSATGTH…SSGSARINVG (189 aa). Asparagine 93 is a glycosylation site (N-linked (GlcNAc...) asparagine). The active-site Nucleophile is the glutamate 118. The active-site Proton donor is the glutamate 209. The segment at 223-246 is disordered; that stretch reads GGSTGGGNNGGGNNGGNPGGNPGG. Positions 255 to 291 constitute a CBM1 domain; it reads NCSPRWGQCGGQGWNGPTCCESGTTCRQQNQWYSQCL.

It belongs to the glycosyl hydrolase 11 (cellulase G) family.

Its subcellular location is the secreted. The enzyme catalyses Endohydrolysis of (1-&gt;4)-beta-D-xylosidic linkages in xylans.. It functions in the pathway glycan degradation; xylan degradation. The activity iss completely inhibited by Hg(2+), a metal ion that interacts with Trp and oxidizes the indole ring, and is significantly enhanced by beta-mercaptoethanol, which counteracts the oxidation effects of the S-S linkage between Cys residues. In terms of biological role, endo-1,4-beta-xylanase involved in the hydrolysis of xylan, a major structural heterogeneous polysaccharide found in plant biomass representing the second most abundant polysaccharide in the biosphere, after cellulose. Shows maximum activity on soluble wheat arabinoxylan (defined as 100%), moderate activity on birchwood xylan (80.5%) and beechwood xylan (76.2%), and weak activity on insoluble wheat arabinoxylan (7.0%). Has no activity towards glucan or carboxymethyl cellulose-sodium (CMC-Na). The chain is Endo-1,4-beta-xylanase 11B from Humicola insolens (Soft-rot fungus).